The sequence spans 816 residues: Phosphatidylinositol 4-kinase beta (816 aa).

3 disordered regions span residues 1–30 (MGDM…GSLL), 101–120 (EDEM…RRRR), and 250–318 (RKRE…SFSS). Glycine 2 bears the N-acetylglycine mark. Residues 2–68 (GDMVVEPATL…VKLLHGGVAI (67 aa)) are interaction with ACBD3. The segment covering 10 to 30 (TLKPTSEPTPSPSGNNGGSLL) has biased composition (low complexity). The PIK helical domain occupies 52-242 (CQEVLEKVKL…GTKLRKLILS (191 aa)). Serine 258 carries the phosphoserine modification. The residue at position 263 (threonine 263) is a Phosphothreonine. Residues serine 266, serine 275, serine 277, serine 284, and serine 294 each carry the phosphoserine modification. Polar residues-rich tracts occupy residues 278-297 (DATA…SNPK) and 306-318 (SSST…SFSS). Serine 428 bears the Phosphoserine mark. Threonine 438 is subject to Phosphothreonine. Phosphoserine is present on serine 511. Threonine 517 and threonine 519 each carry phosphothreonine. Positions 535–801 (EPWQEKVRRI…MVDGSMRSIT (267 aa)) constitute a PI3K/PI4K catalytic domain. The interval 541–547 (VRRIREG) is G-loop. A catalytic loop region spans residues 668-676 (QVKDRHNGN). Residues 687–711 (HIDFGFILSSSPRNLGFETSAFKLT) are activation loop.

The protein belongs to the PI3/PI4-kinase family. Type III PI4K subfamily. In terms of assembly, interacts with ARF1 and ARF3 in the Golgi complex, but not with ARF4, ARF5 or ARF6. Interacts with NCS1/FREQ in a calcium-independent manner. Interacts with CALN1/CABP8 and CALN2/CABP7; in a calcium-dependent manner; this interaction competes with NCS1/FREQ binding. Interacts with ACBD3. Interacts with ARMH3, YWHAB, YWHAE, YWHAG, YWHAH, YWHAQ, YWHAZ and SFN. Interacts with GGA2 (via VHS domain); the interaction is important for PI4KB location at the Golgi apparatus membrane. Interacts with ATG9A. The cofactor is Mg(2+). Requires Mn(2+) as cofactor.

Its subcellular location is the endomembrane system. The protein resides in the mitochondrion outer membrane. It localises to the rough endoplasmic reticulum membrane. The protein localises to the golgi apparatus. It is found in the golgi apparatus membrane. The catalysed reaction is a 1,2-diacyl-sn-glycero-3-phospho-(1D-myo-inositol) + ATP = a 1,2-diacyl-sn-glycero-3-phospho-(1D-myo-inositol 4-phosphate) + ADP + H(+). Inhibited by wortmannin. Increased kinase activity upon interaction with NCS1/FREQ. Functionally, phosphorylates phosphatidylinositol (PI) in the first committed step in the production of the second messenger inositol-1,4,5,-trisphosphate (PIP). May regulate Golgi disintegration/reorganization during mitosis, possibly via its phosphorylation. Involved in Golgi-to-plasma membrane trafficking. May play an important role in the inner ear development. The chain is Phosphatidylinositol 4-kinase beta (Pi4kb) from Mus musculus (Mouse).